The chain runs to 255 residues: Alkaline ceramidase (255 aa).

Residues 1-28 (MADGISSFWGPVTSTIECCEMNYAYSSY) lie on the Lumenal side of the membrane. A helical transmembrane segment spans residues 29–49 (IAEFYNTISNVPGILLALIGL). The Cytoplasmic segment spans residues 50–60 (VNALRQRFEKR). Residues 61–81 (FSILHISNMILAIGSMLYHAT) traverse the membrane as a helical segment. Residue His79 participates in Zn(2+) binding. The Lumenal segment spans residues 82–91 (LQHVQQQSDE). The helical transmembrane segment at 92-112 (TPMVWEILLYMYILYSPDWHY) threads the bilayer. At 113 to 118 (RSTMPT) the chain is on the cytoplasmic side. Transmembrane regions (helical) follow at residues 119–139 (FLFL…FGIG) and 140–160 (FKVH…KYYI). Residues 161-169 (HTEDTAAKR) are Cytoplasmic-facing. Residues 170-192 (IAKWYVATILVGSICWFCDRVFC) traverse the membrane as a helical segment. Over 193 to 205 (KTISQWPVNPQGH) the chain is Lumenal. Zn(2+)-binding residues include His205 and His209. A helical membrane pass occupies residues 206–226 (ALWHVFMSFNSYCANTFLMFC). The Cytoplasmic segment spans residues 227-255 (RAQQRGWNPKVKYFLGVLPYVKIEKPKTQ).

The protein belongs to the alkaline ceramidase family. Zn(2+) is required as a cofactor. In terms of tissue distribution, mostly expressed in roots, shoot meristems and pollen, and, to a lower extent, in mature leaves.

It is found in the endoplasmic reticulum membrane. The protein localises to the golgi apparatus membrane. Functionally, hydrolyzes only phytoceramide into phytosphingosine and free fatty acid. Does not have reverse activity. Affects plant morphogenesis. Required for the formation of wax layer that ensure cuticle permeability. Implicated in abscisic acid (ABA)-mediated stomatal closure. Involved in both biotic and abiotic stresses. Promotes salt resistance and defenses responses toward pathogenic bacteria (e.g. P.syringae) and against the fungal toxin fumonisin B1 (FB1). The chain is Alkaline ceramidase from Arabidopsis thaliana (Mouse-ear cress).